Here is a 65-residue protein sequence, read N- to C-terminus: VESP-VB1 (65 aa).

An N-terminal signal peptide occupies residues 1–23 (MKMSILFLFALIASLACLQLTFA). AXPX repeat units follow at residues 23–26 (AAPA), 27–30 (ASPL), 31–34 (ANPG), 35–38 (ASPE), 39–42 (AAPL), 43–46 (ADPL), and 47–50 (ADPF). The propeptide occupies 24-49 (APAASPLANPGASPEAAPLADPLADP). L62 carries the leucine amide modification.

In terms of tissue distribution, expressed by the venom gland.

It localises to the secreted. In terms of biological role, antimicrobial peptide. Shows activity against both Gram-positive (S.aureus MIC=1.0-3.75 ug/ml) and -negative (E.coli MIC=7.5-15 ug/ml) bacteria, as well against fungi (C.albicans MIC=30 ug/ml). Also promotes important mast cell degranulation. Shows little hemolytic activity on rabbit and human erythrocytes. Its mast cell degranulation activity may be related to the activation of G-protein coupled receptors in mast cells as well as interaction with other proteins located in cell endosomal membranes in the mast cells. This chain is VESP-VB1, found in Vespa bicolor (Black shield wasp).